The primary structure comprises 317 residues: Ribosomal protein L11 methyltransferase (317 aa).

Thr158, Gly179, Asp201, and Asn244 together coordinate S-adenosyl-L-methionine.

Belongs to the methyltransferase superfamily. PrmA family.

It is found in the cytoplasm. The catalysed reaction is L-lysyl-[protein] + 3 S-adenosyl-L-methionine = N(6),N(6),N(6)-trimethyl-L-lysyl-[protein] + 3 S-adenosyl-L-homocysteine + 3 H(+). Methylates ribosomal protein L11. The sequence is that of Ribosomal protein L11 methyltransferase from Streptococcus agalactiae serotype III (strain NEM316).